An 865-amino-acid chain; its full sequence is Armadillo repeat-containing protein 2 (865 aa).

Disordered regions lie at residues 39–75 (TVRT…FSVH) and 214–243 (SVPF…DQSR). Over residues 60 to 75 (SSRTPENRPPSSFSVH) the composition is skewed to polar residues. 12 ARM repeats span residues 261–300 (IEVD…HALE), 303–343 (NMLG…ALKV), 362–402 (EKND…TIKF), 407–448 (PEFL…HLLV), 461–502 (PLAR…KLTS), 505–546 (DCCV…NLTA), 550–587 (QARE…GEGD), 589–614 (RPEA…NLAI), 617–660 (GVGP…NLSY), 662–703 (KVKN…NLSQ), 705–744 (HDIC…NLTV), and 746–788 (RDKR…NFSE).

In terms of biological role, required for sperm flagellum axoneme organization and function. Involved in axonemal central pair complex assembly and/or stability. This Bos taurus (Bovine) protein is Armadillo repeat-containing protein 2.